The chain runs to 232 residues: 5'-methylthioadenosine/S-adenosylhomocysteine nucleosidase (232 aa).

Glu12 (proton acceptor) is an active-site residue. Residues Gly78, Ile152, and 173–174 (ME) each bind substrate. The active-site Proton donor is the Asp197.

The protein belongs to the PNP/UDP phosphorylase family. MtnN subfamily. In terms of assembly, homodimer.

It carries out the reaction S-adenosyl-L-homocysteine + H2O = S-(5-deoxy-D-ribos-5-yl)-L-homocysteine + adenine. The catalysed reaction is S-methyl-5'-thioadenosine + H2O = 5-(methylsulfanyl)-D-ribose + adenine. The enzyme catalyses 5'-deoxyadenosine + H2O = 5-deoxy-D-ribose + adenine. The protein operates within amino-acid biosynthesis; L-methionine biosynthesis via salvage pathway; S-methyl-5-thio-alpha-D-ribose 1-phosphate from S-methyl-5'-thioadenosine (hydrolase route): step 1/2. In terms of biological role, catalyzes the irreversible cleavage of the glycosidic bond in both 5'-methylthioadenosine (MTA) and S-adenosylhomocysteine (SAH/AdoHcy) to adenine and the corresponding thioribose, 5'-methylthioribose and S-ribosylhomocysteine, respectively. Also cleaves 5'-deoxyadenosine, a toxic by-product of radical S-adenosylmethionine (SAM) enzymes, into 5-deoxyribose and adenine. Thus, is required for in vivo function of the radical SAM enzymes biotin synthase and lipoic acid synthase, that are inhibited by 5'-deoxyadenosine accumulation. This Pectobacterium carotovorum subsp. carotovorum (strain PC1) protein is 5'-methylthioadenosine/S-adenosylhomocysteine nucleosidase.